A 267-amino-acid chain; its full sequence is GTP cyclohydrolase MptA (267 aa).

It belongs to the GTP cyclohydrolase IV family. In terms of assembly, homodimer. Requires Fe(2+) as cofactor.

It carries out the reaction GTP + H2O = 7,8-dihydroneopterin 2',3'-cyclic phosphate + formate + diphosphate + H(+). The protein operates within cofactor biosynthesis; 5,6,7,8-tetrahydromethanopterin biosynthesis. Converts GTP to 7,8-dihydro-D-neopterin 2',3'-cyclic phosphate, the first intermediate in the biosynthesis of coenzyme methanopterin. The protein is GTP cyclohydrolase MptA of Thermococcus kodakarensis (strain ATCC BAA-918 / JCM 12380 / KOD1) (Pyrococcus kodakaraensis (strain KOD1)).